We begin with the raw amino-acid sequence, 307 residues long: NAD kinase 1 (307 aa).

The active-site Proton acceptor is the aspartate 67. NAD(+) is bound by residues 67–68, 149–150, arginine 179, and aspartate 181; these read DG and ND.

The protein belongs to the NAD kinase family. Requires a divalent metal cation as cofactor.

It is found in the cytoplasm. It carries out the reaction NAD(+) + ATP = ADP + NADP(+) + H(+). Involved in the regulation of the intracellular balance of NAD and NADP, and is a key enzyme in the biosynthesis of NADP. Catalyzes specifically the phosphorylation on 2'-hydroxyl of the adenosine moiety of NAD to yield NADP. This is NAD kinase 1 from Prochlorococcus marinus (strain SARG / CCMP1375 / SS120).